Reading from the N-terminus, the 202-residue chain is GMP synthase [glutamine-hydrolyzing] subunit A (202 aa).

The 191-residue stretch at 4-194 (KIYVVDNGGQ…IAICQQHKEK (191 aa)) folds into the Glutamine amidotransferase type-1 domain. The active-site Nucleophile is C81. Residues H168 and E170 contribute to the active site.

In terms of assembly, heterodimer composed of a glutamine amidotransferase subunit (A) and a GMP-binding subunit (B).

It catalyses the reaction XMP + L-glutamine + ATP + H2O = GMP + L-glutamate + AMP + diphosphate + 2 H(+). The protein operates within purine metabolism; GMP biosynthesis; GMP from XMP (L-Gln route): step 1/1. In terms of biological role, catalyzes the synthesis of GMP from XMP. This chain is GMP synthase [glutamine-hydrolyzing] subunit A, found in Thermoplasma volcanium (strain ATCC 51530 / DSM 4299 / JCM 9571 / NBRC 15438 / GSS1).